The primary structure comprises 150 residues: Deoxyuridine 5'-triphosphate nucleotidohydrolase (150 aa).

Substrate-binding positions include 69–71 (RSG), N82, 86–88 (LID), and K96.

It belongs to the dUTPase family. Requires Mg(2+) as cofactor.

It catalyses the reaction dUTP + H2O = dUMP + diphosphate + H(+). It participates in pyrimidine metabolism; dUMP biosynthesis; dUMP from dCTP (dUTP route): step 2/2. In terms of biological role, this enzyme is involved in nucleotide metabolism: it produces dUMP, the immediate precursor of thymidine nucleotides and it decreases the intracellular concentration of dUTP so that uracil cannot be incorporated into DNA. The sequence is that of Deoxyuridine 5'-triphosphate nucleotidohydrolase from Neisseria gonorrhoeae (strain NCCP11945).